A 226-amino-acid polypeptide reads, in one-letter code: Glutathione peroxidase 3 (226 aa).

The first 24 residues, 1-24, serve as a signal peptide directing secretion; that stretch reads MARLLQASCLLSLLLAGFVPQSRG. Residue U73 is part of the active site. A non-standard amino acid (selenocysteine) is located at residue U73.

This sequence belongs to the glutathione peroxidase family. Homotetramer. As to expression, secreted in plasma.

Its subcellular location is the secreted. It carries out the reaction 2 glutathione + H2O2 = glutathione disulfide + 2 H2O. It catalyses the reaction tert-butyl hydroperoxide + 2 glutathione = tert-butanol + glutathione disulfide + H2O. Protects cells and enzymes from oxidative damage, by catalyzing the reduction of hydrogen peroxide, lipid peroxides and organic hydroperoxide, by glutathione. In Hylobates lar (Lar gibbon), this protein is Glutathione peroxidase 3.